The following is a 600-amino-acid chain: ATP-dependent lipid A-core flippase (600 aa).

The next 4 helical transmembrane spans lie at 26-46 (VGIF…QPML), 82-102 (LLIV…NYFL), 167-187 (VFLF…MLAI), and 266-286 (PMLQ…VLFL). An ABC transmembrane type-1 domain is found at 30–321 (LLSIIGFVIF…LSEVSSTIQK (292 aa)). The region spanning 353–589 (LEVKNLSFFY…NGYYARLHAM (237 aa)) is the ABC transporter domain. 387 to 394 (GRSGSGKS) serves as a coordination point for ATP.

Belongs to the ABC transporter superfamily. Lipid exporter (TC 3.A.1.106) family. In terms of assembly, homodimer.

The protein resides in the cell inner membrane. The enzyme catalyses ATP + H2O + lipid A-core oligosaccharideSide 1 = ADP + phosphate + lipid A-core oligosaccharideSide 2.. Involved in lipopolysaccharide (LPS) biosynthesis. Translocates lipid A-core from the inner to the outer leaflet of the inner membrane. Transmembrane domains (TMD) form a pore in the inner membrane and the ATP-binding domain (NBD) is responsible for energy generation. This is ATP-dependent lipid A-core flippase from Pseudomonas syringae pv. syringae (strain B728a).